We begin with the raw amino-acid sequence, 440 residues long: Gap junction gamma-2 protein (440 aa).

The Cytoplasmic portion of the chain corresponds to 1–21 (MTNMSWSFLTRLLEEIHNHST). A helical membrane pass occupies residues 22 to 42 (FVGKVWLTVLVVFRIVLTAVG). Residues 43–78 (GESIYSDEQSKFTCNTRQPGCDNVCYDAFAPLSHVR) lie on the Extracellular side of the membrane. Residues 79–99 (FWVFQIVVISTPSVMYLGYAV) form a helical membrane-spanning segment. The Cytoplasmic segment spans residues 100 to 223 (HRLARASEQE…AQLVVRAAFE (124 aa)). Residues 108–199 (QERRRALRRR…TPGPAGQHDG (92 aa)) are disordered. The segment covering 112–124 (RALRRRPGPRRLP) has biased composition (basic residues). Residues 150–173 (LEEDEDEEPGAPEGPGEDTEEERT) show a composition bias toward acidic residues. The chain crosses the membrane as a helical span at residues 224–244 (VAFLVGQYLLYGFEVPPFFAC). Topologically, residues 245–264 (SRQPCPHVVDCFVSRPTEKT) are extracellular. Residues 265 to 285 (VFLLVMYVVSCLCLLLNLCEM) form a helical membrane-spanning segment. The Cytoplasmic portion of the chain corresponds to 286 to 440 (AHLGLGSAQD…SRDGKATVWI (155 aa)). Residues 368 to 440 (ADRDSPPCSG…SRDGKATVWI (73 aa)) are disordered. S372 bears the Phosphoserine mark. Residues 380-401 (ATSRGPPRAGGPASGTGSATSG) are compositionally biased toward low complexity.

It belongs to the connexin family. Gamma-type subfamily. As to quaternary structure, a connexon is composed of a hexamer of connexins. Interacts with TJP1. In terms of tissue distribution, mainly expressed by oligodendrocytes in the central nervous system. Expressed in optic nerve (at protein level).

It localises to the cell membrane. Its subcellular location is the cell junction. The protein localises to the gap junction. Its function is as follows. One gap junction consists of a cluster of closely packed pairs of transmembrane channels, the connexons, through which materials of low MW diffuse from one cell to a neighboring cell. May play a role in myelination in central and peripheral nervous systems. In Rattus norvegicus (Rat), this protein is Gap junction gamma-2 protein (Gjc2).